The following is a 1038-amino-acid chain: MKQRISALDLLLLARELKQDLEGYRLSNIYNIADSSKQFLLKFNKPDSKLNVVVDCGLRIYLTEFSRPIPPTPSGFVVKLRKHLKAKRLTALKQVDQDRILVLQFADGHFYLVLEFFSAGNVILLDENRRIMALQRVVLEHENKVGQIYEMFDESLFTTNNESADESIEKNRKAEYTSELVNEWIKAVQAKYESDITVIKQLNIQGKEGAKKKKVKVPSIHKLLLSKVPHLSSDLLSKNLKVFNIDPSESCLNLLEETDSLAELLNSTQLEYNQLLTTTDRKGYILAKRNENYISEKDTADLEFIYDTFHPFKPYINGGDTDSSCIIEVEGPYNRTLDKFFSTIESSKYALRIQNQESQAQKKIDDARAENDRKIQALLDVQELNERKGHLIIENAPLIEEVKLAVQGLIDQQMDWNTIEKLIKSEQKKGNRIAQLLNLPLNLKQNKISVKLDLSSKELNTSSDEDNESEGNTTDSSSDSDSEDMESSKERSTKSMKRKSNEKINVTIDLGLSAYANATEYFNIKKTSAQKQKKVEKNVGKAMKNIEVKIDQQLKKKLKDSHSVLKKIRTPYFFEKYSWFISSEGFLVMMGKSPAETDQIYSKYIEDDDIYMSNSFNSHVWIKNPEKTEVPPNTLMQAGILCMSSSEAWSKKISSSPWWCFAKNVSKFDGSDNSILPEGAFRLKNENDQNHLPPAQLVMGFGFLWKVKTSGNEDNGDDDEEEEEEEEEEEEEEEEEEEEEEEEKEEEEKEEEQQQDEDDSNEVNGLEKGGDSNDSTKNNSFEHDNLEKDIEKHCTISSDTDSDSGNAKAKNDNSSTQRILDEPGVPISLIENINSNVRGKRGKLKKIQKKYADQDETERLLRLEALGTLKGIEKQQQRKKEEIMKREVREDRKNKREKQRRLQALKFTKKEKARVNYDKHKSELKPSLDKGDVVDDIIPVFAPWPALLKYKYKVKIQPGSAKKTKTLTEILHYFKSRPLDGSSTDNEMDWPQEHEMIKGLKEQDLVLLLCVDKLKVTIAGQKSTKNGGNSSKKGKKKR.

The stretch at 350-383 (ALRIQNQESQAQKKIDDARAENDRKIQALLDVQE) forms a coiled coil. Disordered regions lie at residues 459–499 (LNTS…MKRK), 708–824 (KTSG…DEPG), and 877–898 (QRKKEEIMKREVREDRKNKREK). The stretch at 713–768 (EDNGDDDEEEEEEEEEEEEEEEEEEEEEEEEKEEEEKEEEQQQDEDDSNEVNGLEK) forms a coiled coil. The span at 714 to 761 (DNGDDDEEEEEEEEEEEEEEEEEEEEEEEEKEEEEKEEEQQQDEDDSN) shows a compositional bias: acidic residues. A compositionally biased stretch (basic and acidic residues) spans 780 to 794 (SFEHDNLEKDIEKHC). Positions 795-805 (TISSDTDSDSG) are enriched in polar residues. Serine 797 carries the phosphoserine modification. Positions 830–912 (IENINSNVRG…QALKFTKKEK (83 aa)) form a coiled coil. A compositionally biased stretch (basic and acidic residues) spans 877–894 (QRKKEEIMKREVREDRKN).

The protein belongs to the NEMF family. As to quaternary structure, component of the ribosome quality control complex (RQC), composed of the E3 ubiquitin ligase RKR1/LTN1, RQC1 and RQC2, as well as CDC48 and its ubiquitin-binding cofactors associated with the 60S ribosomal subunit. RQC2 binds to the 40S-binding surface of tRNAs.

The protein localises to the cytoplasm. Its function is as follows. Key component of the ribosome quality control complex (RQC), a ribosome-associated complex that mediates the extraction of incompletely synthesized nascent chains from stalled ribosomes as well as their ubiquitin-mediated proteasomal degradation. Thereby, frees 60S subunit ribosomes from the stalled translation complex and prevents the accumulation of nascent polypeptide chains that are potentially toxic for the cell. Within the RQC complex, RQC2 specifically binds stalled 60S ribosomal subunits by recognizing an exposed, nascent chain-conjugated tRNA moiety and promotes the recruitment of RKR1/LTN1 to stalled 60S subunits. Following binding to stalled 60S ribosomal subunits, RQC2 mediates CAT tailing by recruiting alanine- and threonine-charged tRNA to the A-site and directing the elongation of stalled nascent chains independently of mRNA or 40S subunits, leading to non-templated C-terminal Ala and Thr extensions (CAT tails). CAT tails promote the RKR1/LTN1-mediated ubiquitination of incompletely synthesized nascent polypeptides: CAT tailing facilitates RKR1/LTN1-dependent ubiquitination by exposing lysine residues that would otherwise remain buried in the ribosomal exit tunnel. Following ubiquitination, incompletely synthesized nascent polypeptides are recognized by CDC48 and degraded by the proteasome. CAT-tailed proteins tend to aggregate and sequester chaperones and can induce proteotoxic stress; their RKR1/LTN1-dependent ubiquitination and degradation is required to prevent proteotoxic stress. The chain is Ribosome quality control complex subunit 2 from Saccharomyces cerevisiae (strain ATCC 204508 / S288c) (Baker's yeast).